Reading from the N-terminus, the 83-residue chain is ATP synthase subunit c, chloroplastic (83 aa).

2 helical membrane passes run 3 to 23 and 57 to 77; these read PIIS…AAIG and LAFM…LLFA.

Belongs to the ATPase C chain family. F-type ATPases have 2 components, F(1) - the catalytic core - and F(0) - the membrane proton channel. F(1) has five subunits: alpha(3), beta(3), gamma(1), delta(1), epsilon(1). F(0) has four main subunits: a(1), b(1), b'(1) and c(10-14). The alpha and beta chains form an alternating ring which encloses part of the gamma chain. F(1) is attached to F(0) by a central stalk formed by the gamma and epsilon chains, while a peripheral stalk is formed by the delta, b and b' chains.

It is found in the plastid. Its subcellular location is the chloroplast thylakoid membrane. F(1)F(0) ATP synthase produces ATP from ADP in the presence of a proton or sodium gradient. F-type ATPases consist of two structural domains, F(1) containing the extramembraneous catalytic core and F(0) containing the membrane proton channel, linked together by a central stalk and a peripheral stalk. During catalysis, ATP synthesis in the catalytic domain of F(1) is coupled via a rotary mechanism of the central stalk subunits to proton translocation. Its function is as follows. Key component of the F(0) channel; it plays a direct role in translocation across the membrane. A homomeric c-ring of between 10-14 subunits forms the central stalk rotor element with the F(1) delta and epsilon subunits. This chain is ATP synthase subunit c, chloroplastic, found in Diacronema lutheri (Unicellular marine alga).